An 805-amino-acid polypeptide reads, in one-letter code: Phenylalanine--tRNA ligase beta subunit (805 aa).

The region spanning 40 to 162 (FKNPDYLQLG…NRDEFGDYLS (123 aa)) is the tRNA-binding domain. In terms of domain architecture, B5 spans 412-486 (AFNRKIYLNF…KILDLNKIKE (75 aa)). Asp-464, Asp-470, Glu-473, and Glu-474 together coordinate Mg(2+).

This sequence belongs to the phenylalanyl-tRNA synthetase beta subunit family. Type 1 subfamily. In terms of assembly, tetramer of two alpha and two beta subunits. It depends on Mg(2+) as a cofactor.

Its subcellular location is the cytoplasm. The catalysed reaction is tRNA(Phe) + L-phenylalanine + ATP = L-phenylalanyl-tRNA(Phe) + AMP + diphosphate + H(+). This Mycoplasma pneumoniae (strain ATCC 29342 / M129 / Subtype 1) (Mycoplasmoides pneumoniae) protein is Phenylalanine--tRNA ligase beta subunit (pheT).